We begin with the raw amino-acid sequence, 556 residues long: Urocanate hydratase (556 aa).

Residues 52–53 (GG), Q130, 176–178 (GMG), E196, R201, 242–243 (NA), 263–267 (QTSAH), 273–274 (YL), and Y322 each bind NAD(+). Residue C410 is part of the active site. G492 lines the NAD(+) pocket.

It belongs to the urocanase family. NAD(+) serves as cofactor.

It is found in the cytoplasm. The catalysed reaction is 4-imidazolone-5-propanoate = trans-urocanate + H2O. Its pathway is amino-acid degradation; L-histidine degradation into L-glutamate; N-formimidoyl-L-glutamate from L-histidine: step 2/3. In terms of biological role, catalyzes the conversion of urocanate to 4-imidazolone-5-propionate. The sequence is that of Urocanate hydratase from Shewanella oneidensis (strain ATCC 700550 / JCM 31522 / CIP 106686 / LMG 19005 / NCIMB 14063 / MR-1).